We begin with the raw amino-acid sequence, 310 residues long: Ribosomal RNA small subunit methyltransferase H (310 aa).

Residues 33 to 35, D52, F79, D98, and Q105 contribute to the S-adenosyl-L-methionine site; that span reads GGH.

It belongs to the methyltransferase superfamily. RsmH family.

Its subcellular location is the cytoplasm. The catalysed reaction is cytidine(1402) in 16S rRNA + S-adenosyl-L-methionine = N(4)-methylcytidine(1402) in 16S rRNA + S-adenosyl-L-homocysteine + H(+). Specifically methylates the N4 position of cytidine in position 1402 (C1402) of 16S rRNA. The chain is Ribosomal RNA small subunit methyltransferase H from Campylobacter jejuni subsp. jejuni serotype O:23/36 (strain 81-176).